The following is an 849-amino-acid chain: Alanine--tRNA ligase (849 aa).

Zn(2+) contacts are provided by H551, H555, C653, and H657.

Belongs to the class-II aminoacyl-tRNA synthetase family. It depends on Zn(2+) as a cofactor.

The protein localises to the cytoplasm. The catalysed reaction is tRNA(Ala) + L-alanine + ATP = L-alanyl-tRNA(Ala) + AMP + diphosphate. Functionally, catalyzes the attachment of alanine to tRNA(Ala) in a two-step reaction: alanine is first activated by ATP to form Ala-AMP and then transferred to the acceptor end of tRNA(Ala). Also edits incorrectly charged Ser-tRNA(Ala) and Gly-tRNA(Ala) via its editing domain. The chain is Alanine--tRNA ligase from Sulfurimonas denitrificans (strain ATCC 33889 / DSM 1251) (Thiomicrospira denitrificans (strain ATCC 33889 / DSM 1251)).